A 683-amino-acid chain; its full sequence is Methionine--tRNA ligase (683 aa).

The short motif at 15 to 25 is the 'HIGH' region element; sequence PYANGSIHLGH. Zn(2+) contacts are provided by cysteine 146, cysteine 149, cysteine 159, and cysteine 162. Positions 332–336 match the 'KMSKS' region motif; sequence KMSKS. Lysine 335 contributes to the ATP binding site. The tRNA-binding domain maps to 582 to 683; sequence DFAKVDLRIA…QGAQAGMRVM (102 aa).

The protein belongs to the class-I aminoacyl-tRNA synthetase family. MetG type 1 subfamily. In terms of assembly, homodimer. The cofactor is Zn(2+).

The protein resides in the cytoplasm. The enzyme catalyses tRNA(Met) + L-methionine + ATP = L-methionyl-tRNA(Met) + AMP + diphosphate. Functionally, is required not only for elongation of protein synthesis but also for the initiation of all mRNA translation through initiator tRNA(fMet) aminoacylation. The sequence is that of Methionine--tRNA ligase from Vibrio cholerae serotype O1 (strain ATCC 39315 / El Tor Inaba N16961).